A 92-amino-acid chain; its full sequence is Small ribosomal subunit protein uS19c (92 aa).

It belongs to the universal ribosomal protein uS19 family.

The protein localises to the plastid. The protein resides in the chloroplast. Its function is as follows. Protein S19 forms a complex with S13 that binds strongly to the 16S ribosomal RNA. In Dioscorea elephantipes (Elephant's foot yam), this protein is Small ribosomal subunit protein uS19c.